The primary structure comprises 318 residues: tRNA pseudouridine synthase B (318 aa).

Aspartate 54 acts as the Nucleophile in catalysis.

It belongs to the pseudouridine synthase TruB family. Type 1 subfamily.

The enzyme catalyses uridine(55) in tRNA = pseudouridine(55) in tRNA. Functionally, responsible for synthesis of pseudouridine from uracil-55 in the psi GC loop of transfer RNAs. The polypeptide is tRNA pseudouridine synthase B (Ralstonia pickettii (strain 12J)).